The sequence spans 217 residues: Proteasome subunit beta type-9 (217 aa).

Residues 1 to 18 (MLDESLEPGWLSEEVKTG) constitute a propeptide, removed in mature form. Thr19 (nucleophile) is an active-site residue.

The protein belongs to the peptidase T1B family. As to quaternary structure, the 26S proteasome consists of a 20S proteasome core and two 19S regulatory subunits. The 20S proteasome core is composed of 28 subunits that are arranged in four stacked rings, resulting in a barrel-shaped structure. The two end rings are each formed by seven alpha subunits, and the two central rings are each formed by seven beta subunits. The catalytic chamber with the active sites is on the inside of the barrel. Component of the immunoproteasome, where it displaces the equivalent housekeeping subunit PSMB6. Post-translationally, autocleaved. The resulting N-terminal Thr residue of the mature subunit is responsible for the nucleophile proteolytic activity.

It localises to the cytoplasm. Its subcellular location is the nucleus. It catalyses the reaction Cleavage of peptide bonds with very broad specificity.. Its function is as follows. The proteasome is a multicatalytic proteinase complex which is characterized by its ability to cleave peptides with Arg, Phe, Tyr, Leu, and Glu adjacent to the leaving group at neutral or slightly basic pH. The proteasome has an ATP-dependent proteolytic activity. This subunit is involved in antigen processing to generate class I binding peptides. In Oncorhynchus mykiss (Rainbow trout), this protein is Proteasome subunit beta type-9 (psmb9).